Here is a 66-residue protein sequence, read N- to C-terminus: Large ribosomal subunit protein bL35 (66 aa).

This sequence belongs to the bacterial ribosomal protein bL35 family.

The protein is Large ribosomal subunit protein bL35 of Rhodopseudomonas palustris (strain BisB18).